We begin with the raw amino-acid sequence, 89 residues long: Small ribosomal subunit protein uS15 (89 aa).

The protein belongs to the universal ribosomal protein uS15 family. Part of the 30S ribosomal subunit. Forms a bridge to the 50S subunit in the 70S ribosome, contacting the 23S rRNA.

Functionally, one of the primary rRNA binding proteins, it binds directly to 16S rRNA where it helps nucleate assembly of the platform of the 30S subunit by binding and bridging several RNA helices of the 16S rRNA. In terms of biological role, forms an intersubunit bridge (bridge B4) with the 23S rRNA of the 50S subunit in the ribosome. This Lactiplantibacillus plantarum (strain ATCC BAA-793 / NCIMB 8826 / WCFS1) (Lactobacillus plantarum) protein is Small ribosomal subunit protein uS15.